A 333-amino-acid chain; its full sequence is D-lactate dehydrogenase (333 aa).

NAD(+) contacts are provided by residues 156-157, D176, 207-208, N213, 234-236, and D260; these read HI, VP, and VSR. R236 is an active-site residue. The active site involves E265. H297 serves as the catalytic Proton donor.

Belongs to the D-isomer specific 2-hydroxyacid dehydrogenase family. As to quaternary structure, homodimer.

It catalyses the reaction (R)-lactate + NAD(+) = pyruvate + NADH + H(+). This chain is D-lactate dehydrogenase (ldhA), found in Lactobacillus delbrueckii subsp. bulgaricus (strain ATCC 11842 / DSM 20081 / BCRC 10696 / JCM 1002 / NBRC 13953 / NCIMB 11778 / NCTC 12712 / WDCM 00102 / Lb 14).